The primary structure comprises 297 residues: Phosphatidylglycerol--prolipoprotein diacylglyceryl transferase (297 aa).

3 helical membrane passes run 17 to 37 (LAVR…IVVG), 59 to 79 (MLFY…VLFY), and 97 to 117 (GGMS…LFAW). An a 1,2-diacyl-sn-glycero-3-phospho-(1'-sn-glycerol)-binding site is contributed by R142. The next 2 helical transmembrane spans lie at 230–250 (MGAV…TVEF) and 257–277 (FLGL…PMIV).

The protein belongs to the Lgt family.

The protein localises to the cell inner membrane. It carries out the reaction L-cysteinyl-[prolipoprotein] + a 1,2-diacyl-sn-glycero-3-phospho-(1'-sn-glycerol) = an S-1,2-diacyl-sn-glyceryl-L-cysteinyl-[prolipoprotein] + sn-glycerol 1-phosphate + H(+). The protein operates within protein modification; lipoprotein biosynthesis (diacylglyceryl transfer). Functionally, catalyzes the transfer of the diacylglyceryl group from phosphatidylglycerol to the sulfhydryl group of the N-terminal cysteine of a prolipoprotein, the first step in the formation of mature lipoproteins. This Burkholderia multivorans (strain ATCC 17616 / 249) protein is Phosphatidylglycerol--prolipoprotein diacylglyceryl transferase.